The following is a 200-amino-acid chain: 3-isopropylmalate dehydratase small subunit (200 aa).

This sequence belongs to the LeuD family. LeuD type 1 subfamily. In terms of assembly, heterodimer of LeuC and LeuD.

It catalyses the reaction (2R,3S)-3-isopropylmalate = (2S)-2-isopropylmalate. It participates in amino-acid biosynthesis; L-leucine biosynthesis; L-leucine from 3-methyl-2-oxobutanoate: step 2/4. Functionally, catalyzes the isomerization between 2-isopropylmalate and 3-isopropylmalate, via the formation of 2-isopropylmaleate. The chain is 3-isopropylmalate dehydratase small subunit from Vibrio parahaemolyticus serotype O3:K6 (strain RIMD 2210633).